A 333-amino-acid chain; its full sequence is Adenosine deaminase (333 aa).

Residues His-12 and His-14 each contribute to the Zn(2+) site. Substrate is bound by residues His-14, Asp-16, and Gly-170. His-197 provides a ligand contact to Zn(2+). The active-site Proton donor is Glu-200. Asp-278 is a Zn(2+) binding site. A substrate-binding site is contributed by Asp-279.

Belongs to the metallo-dependent hydrolases superfamily. Adenosine and AMP deaminases family. Adenosine deaminase subfamily. Zn(2+) is required as a cofactor.

The enzyme catalyses adenosine + H2O + H(+) = inosine + NH4(+). It carries out the reaction 2'-deoxyadenosine + H2O + H(+) = 2'-deoxyinosine + NH4(+). Its function is as follows. Catalyzes the hydrolytic deamination of adenosine and 2-deoxyadenosine. The protein is Adenosine deaminase of Klebsiella pneumoniae (strain 342).